The primary structure comprises 167 residues: SsrA-binding protein (167 aa).

Residues 144–167 (HDKRAADKEKQSKKEVRSAMAKYQ) form a disordered region. The span at 146 to 160 (KRAADKEKQSKKEVR) shows a compositional bias: basic and acidic residues.

This sequence belongs to the SmpB family.

The protein localises to the cytoplasm. Its function is as follows. Required for rescue of stalled ribosomes mediated by trans-translation. Binds to transfer-messenger RNA (tmRNA), required for stable association of tmRNA with ribosomes. tmRNA and SmpB together mimic tRNA shape, replacing the anticodon stem-loop with SmpB. tmRNA is encoded by the ssrA gene; the 2 termini fold to resemble tRNA(Ala) and it encodes a 'tag peptide', a short internal open reading frame. During trans-translation Ala-aminoacylated tmRNA acts like a tRNA, entering the A-site of stalled ribosomes, displacing the stalled mRNA. The ribosome then switches to translate the ORF on the tmRNA; the nascent peptide is terminated with the 'tag peptide' encoded by the tmRNA and targeted for degradation. The ribosome is freed to recommence translation, which seems to be the essential function of trans-translation. This chain is SsrA-binding protein, found in Synechococcus sp. (strain CC9902).